We begin with the raw amino-acid sequence, 104 residues long: MYAIVETAGRQYRVEEGKILYTERQKDYSPGDEIVFDRVVFVRKDGEVLVGKPYVEGAKVVGKVLEHAKARKVKTVKYRPRKNSKVEKGHRQWYTAIKIEKIEL.

It belongs to the bacterial ribosomal protein bL21 family. Part of the 50S ribosomal subunit. Contacts protein L20.

In terms of biological role, this protein binds to 23S rRNA in the presence of protein L20. The polypeptide is Large ribosomal subunit protein bL21 (Thermotoga sp. (strain RQ2)).